A 318-amino-acid chain; its full sequence is Methionyl-tRNA formyltransferase (318 aa).

112 to 115 is a binding site for (6S)-5,6,7,8-tetrahydrofolate; that stretch reads SILP.

Belongs to the Fmt family.

It carries out the reaction L-methionyl-tRNA(fMet) + (6R)-10-formyltetrahydrofolate = N-formyl-L-methionyl-tRNA(fMet) + (6S)-5,6,7,8-tetrahydrofolate + H(+). Functionally, attaches a formyl group to the free amino group of methionyl-tRNA(fMet). The formyl group appears to play a dual role in the initiator identity of N-formylmethionyl-tRNA by promoting its recognition by IF2 and preventing the misappropriation of this tRNA by the elongation apparatus. This chain is Methionyl-tRNA formyltransferase, found in Shewanella baltica (strain OS223).